Here is a 262-residue protein sequence, read N- to C-terminus: Pyridoxine 5'-phosphate synthase (262 aa).

N6 serves as a coordination point for 3-amino-2-oxopropyl phosphate. 8–9 (DH) lines the 1-deoxy-D-xylulose 5-phosphate pocket. Position 17 (R17) interacts with 3-amino-2-oxopropyl phosphate. H43 functions as the Proton acceptor in the catalytic mechanism. 1-deoxy-D-xylulose 5-phosphate is bound by residues R45 and H50. E70 serves as the catalytic Proton acceptor. T102 contributes to the 1-deoxy-D-xylulose 5-phosphate binding site. H215 functions as the Proton donor in the catalytic mechanism. 3-amino-2-oxopropyl phosphate contacts are provided by residues G216 and 237-238 (GH).

This sequence belongs to the PNP synthase family. Homooctamer; tetramer of dimers.

The protein localises to the cytoplasm. The enzyme catalyses 3-amino-2-oxopropyl phosphate + 1-deoxy-D-xylulose 5-phosphate = pyridoxine 5'-phosphate + phosphate + 2 H2O + H(+). Its pathway is cofactor biosynthesis; pyridoxine 5'-phosphate biosynthesis; pyridoxine 5'-phosphate from D-erythrose 4-phosphate: step 5/5. Catalyzes the complicated ring closure reaction between the two acyclic compounds 1-deoxy-D-xylulose-5-phosphate (DXP) and 3-amino-2-oxopropyl phosphate (1-amino-acetone-3-phosphate or AAP) to form pyridoxine 5'-phosphate (PNP) and inorganic phosphate. This Helicobacter pylori (strain HPAG1) protein is Pyridoxine 5'-phosphate synthase.